The chain runs to 69 residues: DNA-directed RNA polymerase subunit omega (69 aa).

This sequence belongs to the RNA polymerase subunit omega family. The RNAP catalytic core consists of 2 alpha, 1 beta, 1 beta' and 1 omega subunit. When a sigma factor is associated with the core the holoenzyme is formed, which can initiate transcription.

The enzyme catalyses RNA(n) + a ribonucleoside 5'-triphosphate = RNA(n+1) + diphosphate. In terms of biological role, promotes RNA polymerase assembly. Latches the N- and C-terminal regions of the beta' subunit thereby facilitating its interaction with the beta and alpha subunits. This is DNA-directed RNA polymerase subunit omega from Geotalea uraniireducens (strain Rf4) (Geobacter uraniireducens).